The primary structure comprises 142 residues: Peptide methionine sulfoxide reductase MsrB (142 aa).

The 124-residue stretch at 3-126 folds into the MsrB domain; it reads KEKLKKKLSL…NSAALRFVPF (124 aa). The active-site Nucleophile is the cysteine 115.

This sequence belongs to the MsrB Met sulfoxide reductase family.

It catalyses the reaction L-methionyl-[protein] + [thioredoxin]-disulfide + H2O = L-methionyl-(R)-S-oxide-[protein] + [thioredoxin]-dithiol. In Lactococcus lactis subsp. lactis (strain IL1403) (Streptococcus lactis), this protein is Peptide methionine sulfoxide reductase MsrB.